The following is a 433-amino-acid chain: Pseudopaline synthase (433 aa).

Residues 7 to 27 traverse the membrane as a helical segment; sequence SLGNVLLVGLGAVAIQVALDL. Residues 16–19, 39–40, and threonine 154 contribute to the NAD(+) site; these read LGAV and NH. Histidine 219 functions as the Proton donor/acceptor in the catalytic mechanism. NAD(+) is bound at residue glutamate 364.

The protein belongs to the staphylopine dehydrogenase family. As to quaternary structure, homodimer. Interacts with CntL.

The protein resides in the cell membrane. It carries out the reaction pseudopaline + NAD(+) + H2O = (2S)-2-amino-4-{[(1S)-1-carboxy-2-(1H-imidazol-4-yl)ethyl]amino}butanoate + 2-oxoglutarate + NADH + H(+). Catalyzes the NADH-dependent reductive condensation of alpha-ketoglutarate to the intermediate formed by the adjacently encoded enzyme CntL, namely (2S)-2-amino-4-{[(1S)-1-carboxy-2-(1H-imidazol-4-yl)ethyl]amino}butanoate, leading to the production of pseudopaline. This is the last step in the biosynthesis of the metallophore pseudopaline, which is involved in the acquisition of nickel and zinc, and thus enables bacterial growth inside the host, where metal access is limited. Therefore, this enzyme probably contributes to Pseudomonas virulence. Can use neither pyruvate nor NADPH in place of alpha-ketoglutarate and NADH, respectively. This chain is Pseudopaline synthase, found in Pseudomonas aeruginosa (strain UCBPP-PA14).